We begin with the raw amino-acid sequence, 273 residues long: DNA replication complex GINS protein psf2 (273 aa).

2 disordered regions span residues 88–110 (KEDP…SQPG) and 240–273 (ASAE…DMGL). A compositionally biased stretch (basic and acidic residues) spans 244 to 257 (ATRREEEEEARRGG). The segment covering 261 to 273 (GDGDEDSDEDMGL) has biased composition (acidic residues).

It belongs to the GINS2/PSF2 family. As to quaternary structure, component of the GINS complex which is a heterotetramer of div-26/sld5, drc-1/psf1, drc-2/psf2 and drc-3/psf3.

The protein localises to the nucleus. Its function is as follows. The GINS complex plays an essential role in the initiation of DNA replication. Has a role in chromosome segregation. This chain is DNA replication complex GINS protein psf2 (drc-2), found in Neurospora crassa (strain ATCC 24698 / 74-OR23-1A / CBS 708.71 / DSM 1257 / FGSC 987).